The following is a 344-amino-acid chain: Phenylalanine--tRNA ligase alpha subunit (344 aa).

A Mg(2+)-binding site is contributed by Glu255.

It belongs to the class-II aminoacyl-tRNA synthetase family. Phe-tRNA synthetase alpha subunit type 1 subfamily. In terms of assembly, tetramer of two alpha and two beta subunits. The cofactor is Mg(2+).

Its subcellular location is the cytoplasm. The enzyme catalyses tRNA(Phe) + L-phenylalanine + ATP = L-phenylalanyl-tRNA(Phe) + AMP + diphosphate + H(+). The polypeptide is Phenylalanine--tRNA ligase alpha subunit (Persephonella marina (strain DSM 14350 / EX-H1)).